Consider the following 137-residue polypeptide: Small ribosomal subunit protein uS9c (137 aa).

This sequence belongs to the universal ribosomal protein uS9 family.

The protein localises to the plastid. It is found in the chloroplast. This is Small ribosomal subunit protein uS9c (rps9) from Chlorella vulgaris (Green alga).